The primary structure comprises 118 residues: Cell division protein FtsB (118 aa).

The Cytoplasmic portion of the chain corresponds to 1–3; that stretch reads MRL. A helical transmembrane segment spans residues 4–21; sequence LFLVLLVLLGLIQYPLWL. The Periplasmic portion of the chain corresponds to 22 to 118; that stretch reads GKGGWFKVWD…PRPPATPPRR (97 aa). Residues 28–62 adopt a coiled-coil conformation; sequence KVWDLQRQVAEQRETNDGLRARNTALEAEVRDLAT. A disordered region spans residues 88–118; sequence LPPGTPLPSDNSTPQASALSKPRPPATPPRR. Residues 95–105 show a composition bias toward polar residues; it reads PSDNSTPQASA. Residues 109 to 118 show a composition bias toward pro residues; the sequence is PRPPATPPRR.

It belongs to the FtsB family. As to quaternary structure, part of a complex composed of FtsB, FtsL and FtsQ.

It is found in the cell inner membrane. Essential cell division protein. May link together the upstream cell division proteins, which are predominantly cytoplasmic, with the downstream cell division proteins, which are predominantly periplasmic. This chain is Cell division protein FtsB, found in Bordetella bronchiseptica (strain ATCC BAA-588 / NCTC 13252 / RB50) (Alcaligenes bronchisepticus).